The chain runs to 3011 residues: Genome polyprotein (3011 aa).

Serine 2 bears the N-acetylserine; by host mark. Positions 2 to 23 are interaction with STAT1; the sequence is STIPKPQRKTKRNTNRRPQDVK. Residues 2–58 form an interaction with EIF2AK2/PKR region; sequence STIPKPQRKTKRNTNRRPQDVKFPGGGQIVGGVYLLPRRGPRLGVRATRKTSERSQP. The interaction with DDX3X stretch occupies residues 2–59; that stretch reads STIPKPQRKTKRNTNRRPQDVKFPGGGQIVGGVYLLPRRGPRLGVRATRKTSERSQPR. A disordered region spans residues 2–75; the sequence is STIPKPQRKT…PKVRRPEGRT (74 aa). Topologically, residues 2–168 are cytoplasmic; sequence STIPKPQRKT…EDGVNYATGN (167 aa). Short sequence motifs (nuclear localization signal) lie at residues 5–13 and 38–43; these read PKPQRKTKR and PRRGPR. Over residues 7 to 16 the composition is skewed to basic residues; the sequence is PQRKTKRNTN. Positions 32 to 47 are enriched in low complexity; it reads GGVYLLPRRGPRLGVR. Phosphoserine; by host is present on serine 53. 2 consecutive short sequence motifs (nuclear localization signal) follow at residues 58–64 and 66–71; these read PRGRRQP and PKVRRP. Residues 58–68 are compositionally biased toward basic residues; the sequence is PRGRRQPIPKV. Serine 99 bears the Phosphoserine; by host mark. The tract at residues 112–152 is important for endoplasmic reticulum and mitochondrial localization; that stretch reads PRRRSRNLGKVIDTLTCGFADLMGYIPLVGAPLGGAARALA. The residue at position 116 (serine 116) is a Phosphoserine; by host PKA. An interaction with APOA2 region spans residues 122-173; the sequence is VIDTLTCGFADLMGYIPLVGAPLGGAARALAHGVRVLEDGVNYATGNLPGCS. The tract at residues 164–167 is important for lipid droplets localization; it reads YATG. A helical membrane pass occupies residues 169-189; sequence LPGCSFSIFLLALLSCLTVPA. Residues 178 to 191 constitute a propeptide, ER anchor for the core protein, removed in mature form by host signal peptidase; the sequence is LLALLSCLTVPASA. At 190–358 the chain is on the lumenal side; that stretch reads SAYQVRNSTG…AGAHWGVLAG (169 aa). Asparagine 196, asparagine 209, and asparagine 234 each carry an N-linked (GlcNAc...) asparagine; by host glycan. Positions 265-296 are important for fusion; the sequence is LVGSATLCSALYVGDLCGSVFLIGQLFTFSPR. A glycan (N-linked (GlcNAc...) asparagine; by host) is linked at asparagine 305. Residues 359-379 form a helical membrane-spanning segment; that stretch reads IAYFSMVGNWAKVLVVLLLFA. Topologically, residues 380 to 725 are lumenal; the sequence is GVDAETIVSG…WEYVVLLFLL (346 aa). The interval 385–411 is HVR1; it reads TIVSGGQAARAMSGLVSLFTPGAKQNI. Residues asparagine 417, asparagine 423, asparagine 430, and asparagine 448 are each glycosylated (N-linked (GlcNAc...) (high mannose) asparagine; by host). 4 cysteine pairs are disulfide-bonded: cysteine 429–cysteine 552, cysteine 452–cysteine 459, cysteine 486–cysteine 494, and cysteine 503–cysteine 508. The interval 474–479 is HVR2; sequence HANGSG. The CD81-binding 1 stretch occupies residues 480 to 493; it reads PDQRPYCWHYPPKP. Asparagine 532 is a glycosylation site (N-linked (GlcNAc...) (high mannose) asparagine; by host). Asparagine 540 is a glycosylation site (N-linked (GlcNAc...) asparagine; by host). Residues 544–551 form a CD81-binding 2 region; that stretch reads PPLGNWFG. An N-linked (GlcNAc...) (high mannose) asparagine; by host glycan is attached at asparagine 556. An intrachain disulfide couples cysteine 564 to cysteine 569. Asparagine 576 is a glycosylation site (N-linked (GlcNAc...) (high mannose) asparagine; by host). Disulfide bonds link cysteine 581/cysteine 585, cysteine 597/cysteine 620, and cysteine 607/cysteine 644. Residues asparagine 623 and asparagine 645 are each glycosylated (N-linked (GlcNAc...) (high mannose) asparagine; by host). An intrachain disulfide couples cysteine 652 to cysteine 677. The segment at 660–671 is PKR/eIF2-alpha phosphorylation homology domain (PePHD); it reads SELSPLLLSTTQ. Residues 726-746 traverse the membrane as a helical segment; that stretch reads LADARVCSCLWMMLLISQAEA. The Lumenal portion of the chain corresponds to 747-757; it reads ALENLVILNAA. The helical transmembrane segment at 758 to 778 threads the bilayer; the sequence is SLAGTRGLVSFLVFFCFAWYL. At 779–781 the chain is on the cytoplasmic side; the sequence is KGR. The chain crosses the membrane as a helical span at residues 782–803; sequence WVPGAAYALYGMWPLLLLLLAL. The Lumenal portion of the chain corresponds to 804–813; the sequence is PQRAYALDTE. A helical transmembrane segment spans residues 814–834; the sequence is VAASCGGVVLVGLMALTLSPY. Topologically, residues 835 to 838 are cytoplasmic; sequence YKRC. Residues 839-859 traverse the membrane as a helical segment; the sequence is ISWCLWWLQYFLTRVEAQLHV. Residues 860-881 lie on the Lumenal side of the membrane; it reads WVPPLNVRGGRDAVILLMCVVH. Residues 882 to 902 form a helical membrane-spanning segment; sequence PTLVFDITKLLLAVLGPLWIL. The Peptidase C18 domain occupies 903–1026; it reads QASLLKVPYF…GMVSKGWRLL (124 aa). Residues 903 to 1657 are Cytoplasmic-facing; that stretch reads QASLLKVPYF…CMSADLEVVT (755 aa). The interval 904-1206 is protease NS2-3; sequence ASLLKVPYFV…PVESLETTMR (303 aa). A lipid anchor (S-palmitoyl cysteine; by host) is attached at cysteine 922. The interaction with host SCPS1 stretch occupies residues 929-949; that stretch reads VGGHYVQMAIIKLGALTGTYV. Active-site for protease NS2 activity; shared with dimeric partner residues include histidine 952, glutamate 972, and cysteine 993. A Peptidase S29 domain is found at 1027–1208; the sequence is APITAYAQQT…ESLETTMRSP (182 aa). Residues histidine 1083 and aspartate 1107 each act as charge relay system; for serine protease NS3 activity in the active site. Positions 1123 and 1125 each coordinate Zn(2+). The Charge relay system; for serine protease NS3 activity role is filled by serine 1165. The Zn(2+) site is built by cysteine 1171 and histidine 1175. The 153-residue stretch at 1217 to 1369 folds into the Helicase ATP-binding domain; it reads PAVPQSFQVA…ANIEEVALST (153 aa). 1230–1237 is an ATP binding site; the sequence is APTGSGKS. Residues serine 1237 and glutamate 1317 each contribute to the Mg(2+) site. The DECH box motif lies at 1316–1319; it reads DECH. The interval 1486 to 1497 is RNA-binding; it reads QRRGRTGRGKPG. Residues 1658–1678 form a helical membrane-spanning segment; the sequence is STWVLVGGVLAALAAYCLSTG. Positions 1679-1690 are NS3-binding; the sequence is CVVIVGRIVLSG. The Cytoplasmic segment spans residues 1679-1805; sequence CVVIVGRIVL…AVTSPLTTSQ (127 aa). Residues 1806–1824 form a helical membrane-spanning segment; sequence TLLFNILGGWVAAQLAAPG. Over 1825–1828 the chain is Lumenal; the sequence is AATA. The helical transmembrane segment at 1829–1849 threads the bilayer; the sequence is FVGSGLAGAAVGSVGLGRVLV. Position 1850 (aspartate 1850) is a topological domain, cytoplasmic. A helical transmembrane segment spans residues 1851–1871; it reads ILAGYGAGVAGALVAFKIMSG. The Lumenal portion of the chain corresponds to 1872–1881; sequence ELPSTEDLVN. The chain crosses the membrane as a helical span at residues 1882–1902; the sequence is LLPAILSPGALVVGVVCAAIL. Over 1903–1972 the chain is Cytoplasmic; it reads RRHVGPGEGA…WLSSESTTPC (70 aa). A lipid anchor (S-palmitoyl cysteine; by host) is attached at cysteine 1972. Residues 1973-2002 lie within the membrane without spanning it; that stretch reads SGSWLRDIWDWICEVLSDFKTWLKTKLMPH. Over 2003 to 2990 the chain is Cytoplasmic; it reads LPGIPFVSCQ…YHSVSHARPR (988 aa). Cysteine 2011, cysteine 2029, cysteine 2031, and cysteine 2052 together coordinate Zn(2+). An FKBP8-binding region spans residues 2120-2208; it reads EFFTELDGVR…ASSSASQLSA (89 aa). The segment at 2120-2332 is transcriptional activation; that stretch reads EFFTELDGVR…PVPPPRKKRT (213 aa). The segment at 2135-2139 is interaction with non-structural protein 4A; it reads PPCKP. The tract at residues 2187-2207 is disordered; the sequence is GRRLARGSPPSEASSSASQLS. Positions 2189–2441 are interaction with host SKP2; the sequence is RLARGSPPSE…TPCAAEEQKL (253 aa). Serine 2194 carries the phosphoserine; by host; in p56 modification. 5 positions are modified to phosphoserine; by host; in p58: serine 2197, serine 2201, serine 2204, serine 2207, and serine 2210. The tract at residues 2210 to 2249 is ISDR; sequence SLKATCTINHDSPDAELIEANLLWRQEMGGNITRVESENK. The tract at residues 2210–2275 is interaction with EIF2AK2/PKR; sequence SLKATCTINH…REISVPAEIL (66 aa). An NS4B-binding region spans residues 2249–2306; the sequence is KVVILDSFDPLVAEEDEREISVPAEILRKSRRFTQALPIWARPDYNPPLIETWKKPNY. The tract at residues 2312–2334 is disordered; that stretch reads HGCPLPPPQSPPVPPPRKKRTVV. Pro residues predominate over residues 2315–2326; it reads PLPPPQSPPVPP. An SH3-binding motif is present at residues 2322–2325; it reads PPVP. The Nuclear localization signal signature appears at 2326–2334; sequence PPRKKRTVV. A Glycyl lysine isopeptide (Lys-Gly) (interchain with G-Cter in ubiquitin) cross-link involves residue lysine 2350. A compositionally biased stretch (low complexity) spans 2351–2369; that stretch reads SFGSSSTSGITGDNTTTSS. Positions 2351–2408 are disordered; it reads SFGSSSTSGITGDNTTTSSEPAPSGCSPDSDAESYSSMPPLEGEPGDPDLSDGSWSTV. The tract at residues 2354 to 2377 is V3; it reads SSSTSGITGDNTTTSSEPAPSGCS. Residues serine 2449 and serine 2462 each carry the phosphoserine; by host modification. The region spanning 2634–2752 is the RdRp catalytic domain; that stretch reads PMGFSYDTRC…ICESAGVQED (119 aa). Aspartate 2640, aspartate 2738, and aspartate 2739 together coordinate Mg(2+). The helical transmembrane segment at 2991-3011 threads the bilayer; the sequence is WFWFCLLLLAAGVGIYLLPNR.

The protein belongs to the hepacivirus polyprotein family. Homooligomer. Interacts with E1 (via C-terminus). Interacts with the non-structural protein 5A. Interacts (via N-terminus) with host STAT1 (via SH2 domain); this interaction results in decreased STAT1 phosphorylation and ubiquitin-mediated proteasome-dependent STAT1 degradation, leading to decreased IFN-stimulated gene transcription. Interacts with host STAT3; this interaction constitutively activates STAT3. Interacts with host LTBR receptor. Interacts with host TNFRSF1A receptor and possibly induces apoptosis. Interacts with host HNRPK. Interacts with host YWHAE. Interacts with host UBE3A/E6AP. Interacts with host DDX3X. Interacts with host APOA2. Interacts with host RXRA protein. Interacts with host SP110 isoform 3/Sp110b; this interaction sequesters the transcriptional corepressor SP110 away from the nucleus. Interacts with host CREB3 nuclear transcription protein; this interaction triggers cell transformation. Interacts with host ACY3. Interacts with host C1QR1. Interacts with host RBM24; this interaction, which enhances the interaction of the mature core protein with 5'-UTR, may inhibit viral translation and favor replication. Interacts with host EIF2AK2/PKR; this interaction induces the autophosphorylation of EIF2AK2. Part of the viral assembly initiation complex composed of NS2, E1, E2, NS3, NS4A, NS5A and the mature core protein. As to quaternary structure, forms a heterodimer with envelope glycoprotein E2. Interacts with mature core protein. Interacts with protease NS2. The heterodimer E1/E2 interacts with host CLDN1; this interaction plays a role in viral entry into host cell. Interacts with host SPSB2 (via C-terminus). Part of the viral assembly initiation complex composed of NS2, E1, E2, NS3, NS4A, NS5A and the mature core protein. Interacts with host NEURL3; this interaction prevents E1 binding to glycoprotein E2. In terms of assembly, forms a heterodimer with envelope glycoprotein E1. Interacts with host CD81 and SCARB1 receptors; these interactions play a role in viral entry into host cell. Interacts with host EIF2AK2/PKR; this interaction inhibits EIF2AK2 and probably allows the virus to evade the innate immune response. Interacts with host CD209/DC-SIGN and CLEC4M/DC-SIGNR. Interact with host SPCS1; this interaction is essential for viral particle assembly. Interacts with protease NS2. The heterodimer E1/E2 interacts with host CLDN1; this interaction plays a role in viral entry into host cell. Part of the viral assembly initiation complex composed of NS2, E1, E2, NS3, NS4A, NS5A and the mature core protein. Interacts with host SLC3A2/4F2hc; the interaction may facilitate viral entry into host cell. Interacts with human PLSCR1. Homohexamer. Homoheptamer. Interacts with protease NS2. As to quaternary structure, homodimer. Interacts with host SPCS1; this interaction is essential for viral particle assembly. Interacts with envelope glycoprotein E1. Interacts with envelope glycoprotein E2. Interacts with viroporin p7. Interacts with serine protease/helicase NS3. Part of the replication complex composed of NS2, NS3, NS4A, NS4B, NS5A and the RNA-directed RNA polymerase embedded in an ER-derived membranous web. Part of the viral assembly initiation complex composed of NS2, E1, E2, NS3, NS4A, NS5A and the mature core protein. In terms of assembly, interacts with protease NS2. Interacts with non-structural protein 4A; this interaction stabilizes the folding of NS3 serine protease. NS3-NS4A interaction is essential for NS3 activation and allows membrane anchorage of the latter. NS3/NS4A complex also prevents phosphorylation of host IRF3, thus preventing the establishment of dsRNA induced antiviral state. Interacts with host MAVS; this interaction leads to the cleavage and inhibition of host MAVS. Interacts with host TICAM1; this interaction leads to the cleavage and inhibition of host TICAM1. Interacts with host TANK-binding kinase/TBK1; this interaction results in the inhibition of the association between TBK1 and IRF3, which leads to the inhibition of IRF3 activation. Interacts with host RBM24. Part of the replication complex composed of NS2, NS3, NS4A, NS4B, NS5A and the RNA-directed RNA polymerase embedded in an ER-derived membranous web. Part of the viral assembly initiation complex composed of NS2, E1, E2, NS3, NS4A, NS5A and the mature core protein. Interacts with NS3 serine protease; this interaction stabilizes the folding of NS3 serine protease. NS3-NS4A interaction is essential for NS3 activation and allows membrane anchorage of the latter. Interacts with non-structural protein 5A (via N-terminus). Part of the replication complex composed of NS2, NS3, NS4A, NS4B, NS5A and the RNA-directed RNA polymerase embedded in an ER-derived membranous web. Part of the viral assembly initiation complex composed of NS2, E1, E2, NS3, NS4A, NS5A and the mature core protein. As to quaternary structure, homomultimer. Interacts with non-structural protein NS5A. Interacts with host PLA2G4C; this interaction likely initiates the recruitment of replication complexes to lipid droplets. Interacts with host STING; this interaction disrupts the interaction between STING and TBK1 thereby suppressing the interferon signaling. Part of the replication complex composed of NS2, NS3, NS4A, NS4B, NS5A and the RNA-directed RNA polymerase embedded in an ER-derived membranous web. In terms of assembly, monomer. Homodimer; dimerization is required for RNA-binding. Interacts with the mature core protein. Interacts (via N-terminus) with non-structural protein 4A. Interacts with non-structural protein 4B. Interacts (via region D2) with RNA-directed RNA polymerase. Part of the viral assembly initiation complex composed of NS2, E1, E2, NS3, NS4A, NS5A and the mature core protein. Part of the replication complex composed of NS2, NS3, NS4A, NS4B, NS5A and the RNA-directed RNA polymerase embedded in an ER-derived membranous web. Interacts with host GRB2. Interacts with host BIN1. Interacts with host PIK3R1. Interacts with host SRCAP. Interacts with host FKBP8. Interacts (via C-terminus) with host VAPB (via MSP domain). Interacts with host EIF2AK2/PKR; this interaction leads to disruption of EIF2AK2 dimerization by NS5A and probably allows the virus to evade the innate immune response. Interacts (via N-terminus) with host PACSIN2 (via N-terminus); this interaction attenuates protein kinase C alpha-mediated phosphorylation of PACSIN2 by disrupting the interaction between PACSIN2 and PRKCA. Interacts (via N-terminus) with host SRC kinase (via SH2 domain). Interacts with most Src-family kinases. Interacts with host IFI27 and SKP2; promotes the ubiquitin-mediated proteasomal degradation of NS5A. Interacts with host GPS2. Interacts with host TNFRSF21; this interaction allows the modulation by the virus of JNK, p38 MAPK, STAT3, and Akt signaling pathways in a DR6-dependent manner. Interacts (via N-terminus) with host CIDEB (via N-terminus); this interaction seems to regulate the association of HCV particles with APOE. Interacts with host CHKA/Choline Kinase-alpha; CHKA bridges host PI4KA and NS5A and potentiates NS5A-stimulated PI4KA activity, which then facilitates the targeting of the ternary complex to the ER for viral replication. Interacts with host SPSB2 (via C-terminus); this interaction targets NS5A for ubiquitination and degradation. Interacts with host RAB18; this interaction may promote the association of NS5A and other replicase components with lipid droplets. Interacts (via region D2) with host PPIA/CYPA; the interaction stimulates RNA-binding ability of NS5A and is dependent on the peptidyl-prolyl cis-trans isomerase activity of PPIA/CYPA. Interacts with host TRIM14; this interaction induces the degradation of NS5A. Homooligomer. Interacts with non-structural protein 5A. Interacts with host VAPB. Interacts with host PRK2/PKN2. Interacts with host HNRNPA1 and SEPT6; these interactions facilitate viral replication. Part of the replication complex composed of NS2, NS3, NS4A, NS4B, NS5A and the RNA-directed RNA polymerase. It depends on Zn(2+) as a cofactor. The cofactor is Mg(2+). Specific enzymatic cleavages in vivo yield mature proteins. The structural proteins, core, E1, E2 and p7 are produced by proteolytic processing by host signal peptidases. The core protein precursor is synthesized as a 23 kDa, which is retained in the ER membrane through the hydrophobic signal peptide. Cleavage by the signal peptidase releases the 21 kDa mature core protein. The cleavage of the core protein precursor occurs between aminoacids 176 and 188 but the exact cleavage site is not known. Some degraded forms of the core protein appear as well during the course of infection. The other proteins (p7, NS2, NS3, NS4A, NS4B, NS5A and NS5B) are cleaved by the viral proteases. Autoprocessing between NS2 and NS3 is mediated by the NS2 cysteine protease catalytic domain and regulated by the NS3 N-terminal domain. In terms of processing, phosphorylated by host PKC and PKA. Post-translationally, ubiquitinated; mediated by UBE3A and leading to core protein subsequent proteasomal degradation. Highly N-glycosylated. In terms of processing, palmitoylation is required for NS2/3 autoprocessing and E2 recruitment to membranes. Post-translationally, palmitoylated. This modification may play a role in its polymerization or in protein-protein interactions. Phosphorylated on serines in a basal form termed p56. p58 is a hyperphosphorylated form of p56. p56 and p58 coexist in the cell in roughly equivalent amounts. Hyperphosphorylation is dependent on the presence of NS4A. Host CSNK1A1/CKI-alpha or RPS6KB1 kinases may be responsible for NS5A phosphorylation. In terms of processing, tyrosine phosphorylation is essential for the interaction with host SRC. Post-translationally, the N-terminus is phosphorylated by host PRK2/PKN2.

It is found in the host endoplasmic reticulum membrane. It localises to the host mitochondrion membrane. The protein localises to the virion. Its subcellular location is the host cytoplasm. The protein resides in the host nucleus. It is found in the host lipid droplet. It localises to the virion membrane. The protein localises to the host mitochondrion. Its subcellular location is the host cell membrane. The protein resides in the host perinuclear region. It carries out the reaction Hydrolysis of four peptide bonds in the viral precursor polyprotein, commonly with Asp or Glu in the P6 position, Cys or Thr in P1 and Ser or Ala in P1'.. It catalyses the reaction a ribonucleoside 5'-triphosphate + H2O = a ribonucleoside 5'-diphosphate + phosphate + H(+). The enzyme catalyses ATP + H2O = ADP + phosphate + H(+). The catalysed reaction is RNA(n) + a ribonucleoside 5'-triphosphate = RNA(n+1) + diphosphate. With respect to regulation, inhibited by the antiviral drug hexamethylene amiloride. Inhibition by amantadine appears to be genotype-dependent. Also inhibited by long-alkyl-chain iminosugar derivatives. Activity is up-regulated by PRK2/PKN2-mediated phosphorylation. Its function is as follows. Packages viral RNA to form a viral nucleocapsid, and promotes virion budding. Participates in the viral particle production as a result of its interaction with the non-structural protein 5A. Binds RNA and may function as a RNA chaperone to induce the RNA structural rearrangements taking place during virus replication. Modulates viral translation initiation by interacting with viral IRES and 40S ribosomal subunit. Affects various cell signaling pathways, host immunity and lipid metabolism. Prevents the establishment of cellular antiviral state by blocking the interferon-alpha/beta (IFN-alpha/beta) and IFN-gamma signaling pathways and by blocking the formation of phosphorylated STAT1 and promoting ubiquitin-mediated proteasome-dependent degradation of STAT1. Activates STAT3 leading to cellular transformation. Regulates the activity of cellular genes, including c-myc and c-fos. May repress the promoter of p53, and sequester CREB3 and SP110 isoform 3/Sp110b in the cytoplasm. Represses cell cycle negative regulating factor CDKN1A, thereby interrupting an important check point of normal cell cycle regulation. Targets transcription factors involved in the regulation of inflammatory responses and in the immune response: suppresses TNF-induced NF-kappa-B activation, and activates AP-1. Binds to dendritic cells (DCs) via C1QR1, resulting in down-regulation of T-lymphocytes proliferation. Alters lipid metabolism by interacting with hepatocellular proteins involved in lipid accumulation and storage. Induces up-regulation of FAS promoter activity, and thereby contributes to the increased triglyceride accumulation in hepatocytes (steatosis). Functionally, forms a heterodimer with envelope glycoprotein E2, which mediates virus attachment to the host cell, virion internalization through clathrin-dependent endocytosis and fusion with host membrane. Fusion with the host cell is most likely mediated by both E1 and E2, through conformational rearrangements of the heterodimer required for fusion rather than a classical class II fusion mechanism. E1/E2 heterodimer binds host apolipoproteins such as APOB and ApoE thereby forming a lipo-viro-particle (LVP). APOE associated to the LVP allows the initial virus attachment to cell surface receptors such as the heparan sulfate proteoglycans (HSPGs), syndecan-1 (SDC1), syndecan-1 (SDC2), the low-density lipoprotein receptor (LDLR) and scavenger receptor class B type I (SCARB1). The cholesterol transfer activity of SCARB1 allows E2 exposure and binding of E2 to SCARB1 and the tetraspanin CD81. E1/E2 heterodimer binding on CD81 activates the epithelial growth factor receptor (EGFR) signaling pathway. Diffusion of the complex E1-E2-EGFR-SCARB1-CD81 to the cell lateral membrane allows further interaction with Claudin 1 (CLDN1) and occludin (OCLN) to finally trigger HCV entry. Forms a heterodimer with envelope glycoprotein E1, which mediates virus attachment to the host cell, virion internalization through clathrin-dependent endocytosis and fusion with host membrane. Fusion with the host cell is most likely mediated by both E1 and E2, through conformational rearrangements of the heterodimer required for fusion rather than a classical class II fusion mechanism. The interaction between envelope glycoprotein E2 and host apolipoprotein E/APOE allows the proper assembly, maturation and infectivity of the viral particles. This interaction is probably promoted via the up-regulation of cellular autophagy by the virus. E1/E2 heterodimer binds host apolipoproteins such as APOB and APOE thereby forming a lipo-viro-particle (LVP). APOE associated to the LVP allows the initial virus attachment to cell surface receptors such as the heparan sulfate proteoglycans (HSPGs), syndecan-1 (SDC1), syndecan-1 (SDC2), the low-density lipoprotein receptor (LDLR) and scavenger receptor class B type I (SCARB1). The cholesterol transfer activity of SCARB1 allows E2 exposure and binding of E2 to SCARB1 and the tetraspanin CD81. E1/E2 heterodimer binding on CD81 activates the epithelial growth factor receptor (EGFR) signaling pathway. Diffusion of the complex E1-E2-EGFR-SCARB1-CD81 to the cell lateral membrane allows further interaction with Claudin 1 (CLDN1) and occludin (OCLN) to finally trigger HCV entry. Inhibits host EIF2AK2/PKR activation, preventing the establishment of an antiviral state. Viral ligand for CD209/DC-SIGN and CLEC4M/DC-SIGNR, which are respectively found on dendritic cells (DCs), and on liver sinusoidal endothelial cells and macrophage-like cells of lymph node sinuses. These interactions allow the capture of circulating HCV particles by these cells and subsequent facilitated transmission to permissive cells such as hepatocytes and lymphocyte subpopulations. The interaction between E2 and host amino acid transporter complex formed by SLC3A2 and SLC7A5/LAT1 may facilitate viral entry into host cell. In terms of biological role, ion channel protein that acts as a viroporin and plays an essential role in the assembly, envelopment and secretion of viral particles. Regulates the host cell secretory pathway, which induces the intracellular retention of viral glycoproteins and favors assembly of viral particles. Creates a pore in acidic organelles and releases Ca(2+) and H(+) in the cytoplasm of infected cells, leading to a productive viral infection. High levels of cytoplasmic Ca(2+) may trigger membrane trafficking and transport of viral ER-associated proteins to viroplasms, sites of viral genome replication. This ionic imbalance induces the assembly of the inflammasome complex, which triggers the maturation of pro-IL-1beta into IL-1beta through the action of caspase-1. Targets also host mitochondria and induces mitochondrial depolarization. In addition of its role as a viroporin, acts as a lipid raft adhesion factor. Its function is as follows. Cysteine protease required for the proteolytic auto-cleavage between the non-structural proteins NS2 and NS3. The N-terminus of NS3 is required for the function of NS2 protease (active region NS2-3). Promotes the initiation of viral particle assembly by mediating the interaction between structural and non-structural proteins. Functionally, displays three enzymatic activities: serine protease with a chymotrypsin-like fold, NTPase and RNA helicase. NS3 serine protease, in association with NS4A, is responsible for the cleavages of NS3-NS4A, NS4A-NS4B, NS4B-NS5A and NS5A-NS5B. The NS3/NS4A complex prevents phosphorylation of host IRF3, thus preventing the establishment of dsRNA induced antiviral state. The NS3/NS4A complex induces host amino acid transporter component SLC3A2, thus contributing to HCV propagation. NS3 RNA helicase binds to RNA and unwinds both dsDNA and dsRNA in the 3' to 5' direction, and likely resolves RNA complicated stable secondary structures in the template strand. Binds a single ATP and catalyzes the unzipping of a single base pair of dsRNA. Inhibits host antiviral proteins TBK1 and IRF3 thereby preventing the establishment of an antiviral state. Cleaves host MAVS/CARDIF thereby preventing the establishment of an antiviral state. Cleaves host TICAM1/TRIF, thereby disrupting TLR3 signaling and preventing the establishment of an antiviral state. Induces a specific membrane alteration that serves as a scaffold for the virus replication complex. This membrane alteration gives rise to the so-called ER-derived membranous web that contains the replication complex. NS4B self-interaction contributes to its function in membranous web formation. Promotes host TRIF protein degradation in a CASP8-dependent manner thereby inhibiting host TLR3-mediated interferon signaling. Disrupts the interaction between STING and TBK1 contributing to the inhibition of interferon signaling. In terms of biological role, phosphorylated protein that is indispensable for viral replication and assembly. Both hypo- and hyperphosphorylated states are required for the viral life cycle. The hyperphosphorylated form of NS5A is an inhibitor of viral replication. Involved in RNA-binding and especially in binding to the viral genome. Zinc is essential for RNA-binding. Participates in the viral particle production as a result of its interaction with the mature viral core protein. Its interaction with host VAPB may target the viral replication complex to vesicles. Down-regulates viral IRES translation initiation. Mediates interferon resistance, presumably by interacting with and inhibiting host EIF2AK2/PKR. Prevents BIN1-induced apoptosis. Acts as a transcriptional activator of some host genes important for viral replication when localized in the nucleus. Via the interaction with host PACSIN2, modulates lipid droplet formation in order to promote virion assembly. Modulates TNFRSF21/DR6 signaling pathway for viral propagation. Its function is as follows. RNA-dependent RNA polymerase that performs primer-template recognition and RNA synthesis during viral replication. Initiates RNA transcription/replication at a flavin adenine dinucleotide (FAD), resulting in a 5'- FAD cap on viral RNAs. In this way, recognition of viral 5' RNA by host pattern recognition receptors can be bypassed, thereby evading activation of antiviral pathways. This is Genome polyprotein from Hepatitis C virus genotype 1b (isolate HC-J1) (HCV).